We begin with the raw amino-acid sequence, 467 residues long: Probable receptor-like protein kinase At3g17420 (467 aa).

An N-terminal signal peptide occupies residues 1 to 35 (MTSQLKRTLTKRYGVLELWEIIVIALFAAFIVILV). Topologically, residues 36–123 (LSVWLSFRKK…LPPSTPSTTA (88 aa)) are extracellular. Residue Asn50 is glycosylated (N-linked (GlcNAc...) asparagine). Position 70 is a phosphoserine (Ser70). A glycan (N-linked (GlcNAc...) asparagine) is linked at Asn79. Residues 102-126 (GSLEKKPLVGSHLPPSTPSTTAPSP) form a disordered region. Residues 124-144 (PSPLLGLPEVSHIGWGHWFTL) form a helical membrane-spanning segment. Residues 145–467 (RDLQLATNHF…DNDITTDAKI (323 aa)) lie on the Cytoplasmic side of the membrane. The 280-residue stretch at 154 to 433 (FSKESIIGDG…MLESDEYPVM (280 aa)) folds into the Protein kinase domain. ATP-binding positions include 160–168 (IGDGGYGVV) and Lys182. Tyr227 is modified (phosphotyrosine). Asp280 (proton acceptor) is an active-site residue. Phosphoserine is present on residues Ser284 and Ser313. Phosphothreonine occurs at positions 314 and 319. Tyr327 carries the phosphotyrosine modification. The interval 413–467 (DKRPKMSQVARMLESDEYPVMPREERRRRRNQNAETHRESTDTNKDNDITTDAKI) is disordered. Over residues 447–467 (ETHRESTDTNKDNDITTDAKI) the composition is skewed to basic and acidic residues.

This sequence belongs to the protein kinase superfamily. Ser/Thr protein kinase family.

The protein localises to the cell membrane. The enzyme catalyses L-seryl-[protein] + ATP = O-phospho-L-seryl-[protein] + ADP + H(+). It catalyses the reaction L-threonyl-[protein] + ATP = O-phospho-L-threonyl-[protein] + ADP + H(+). This chain is Probable receptor-like protein kinase At3g17420, found in Arabidopsis thaliana (Mouse-ear cress).